A 302-amino-acid chain; its full sequence is Bifunctional protein FolD (302 aa).

NADP(+)-binding positions include G168 to S170, T197, and V238.

Belongs to the tetrahydrofolate dehydrogenase/cyclohydrolase family. Homodimer.

The catalysed reaction is (6R)-5,10-methylene-5,6,7,8-tetrahydrofolate + NADP(+) = (6R)-5,10-methenyltetrahydrofolate + NADPH. The enzyme catalyses (6R)-5,10-methenyltetrahydrofolate + H2O = (6R)-10-formyltetrahydrofolate + H(+). It functions in the pathway one-carbon metabolism; tetrahydrofolate interconversion. In terms of biological role, catalyzes the oxidation of 5,10-methylenetetrahydrofolate to 5,10-methenyltetrahydrofolate and then the hydrolysis of 5,10-methenyltetrahydrofolate to 10-formyltetrahydrofolate. The polypeptide is Bifunctional protein FolD (Desulfatibacillum aliphaticivorans).